Reading from the N-terminus, the 244-residue chain is MSDHTIPEYLQPALAQLEKARAAHLENARLMDETVTAIERAEQEKNALAQADGNDADDWRTAFRAAGGVLSDELKQRHIERVARRELVQEYDNLAVVLNFERERLKGACDSTATAYRKAHHHLLSLYAEHELEHALNETCEALVRAMHLSILVQENPLANTTGHQGYVAPEKAVMQQVKSSLEQKIKQMQISLTGEPVLRLTGLSAATLPHMDYEVAGTPAQRKVWQDKIDQQGAELKARGLLS.

In terms of biological role, although P4 acquires its capsid proteins from helper phages such as P2, it possesses the ability to assemble capsids that are only one-third the size of the helper's capsid. The sid protein is responsible for the assembly of P4-sized shells. It forms a P4-specific scaffold with icosahedral symmetry on the outside of the procapsid-like particles. This chain is Glycoprotein 3 (sid), found in Enterobacteria phage P4 (Bacteriophage P4).